Reading from the N-terminus, the 130-residue chain is Small ribosomal subunit protein eS8 (130 aa).

Belongs to the eukaryotic ribosomal protein eS8 family. In terms of assembly, part of the 30S ribosomal subunit.

This chain is Small ribosomal subunit protein eS8, found in Ignicoccus hospitalis (strain KIN4/I / DSM 18386 / JCM 14125).